We begin with the raw amino-acid sequence, 141 residues long: Photosystem I reaction center subunit IV A, chloroplastic (141 aa).

Residues methionine 1–arginine 49 constitute a chloroplast transit peptide. Residues proline 57 to alanine 73 show a composition bias toward low complexity. The interval proline 57–glycine 83 is disordered.

It belongs to the PsaE family. 2 isoforms exists (ratio 1:1). With or without the N-terminal alanine.

It localises to the plastid. Its subcellular location is the chloroplast thylakoid membrane. In terms of biological role, stabilizes the interaction between PsaC and the PSI core, assists the docking of the ferredoxin to PSI and interacts with ferredoxin-NADP oxidoreductase. In Nicotiana sylvestris (Wood tobacco), this protein is Photosystem I reaction center subunit IV A, chloroplastic (PSAEA).